Consider the following 236-residue polypeptide: (5-formylfuran-3-yl)methyl phosphate synthase (236 aa).

The active-site Schiff-base intermediate with substrate is the K27. K85 acts as the Proton acceptor in catalysis.

This sequence belongs to the MfnB family.

The enzyme catalyses 2 D-glyceraldehyde 3-phosphate = 4-(hydroxymethyl)-2-furancarboxaldehyde phosphate + phosphate + 2 H2O. It functions in the pathway cofactor biosynthesis; methanofuran biosynthesis. Functionally, catalyzes the formation of 4-(hydroxymethyl)-2-furancarboxaldehyde phosphate (4-HFC-P) from two molecules of glyceraldehyde-3-P (GA-3-P). In Methanococcus maripaludis (strain C5 / ATCC BAA-1333), this protein is (5-formylfuran-3-yl)methyl phosphate synthase.